We begin with the raw amino-acid sequence, 523 residues long: UDP-glucuronosyltransferase 3A1 (523 aa).

The first 22 residues, 1–22 (MAAHRSWLLVSFFLLEVLLLEA), serve as a signal peptide directing secretion. Residues 23 to 487 (AKILTISTLS…QPWHEQYMLD (465 aa)) lie on the Extracellular side of the membrane. A glycan (N-linked (GlcNAc...) asparagine) is linked at asparagine 70. A helical membrane pass occupies residues 488-508 (VFLFLLGLTLGTLWLSVKVLV). The Cytoplasmic segment spans residues 509 to 523 (AVTRYLSISRKVKQA).

This sequence belongs to the UDP-glycosyltransferase family. As to expression, highly expressed in kidney, while it is expressed at low levels in liver. Not detected in other tissues examined.

Its subcellular location is the membrane. It catalyses the reaction glucuronate acceptor + UDP-alpha-D-glucuronate = acceptor beta-D-glucuronoside + UDP + H(+). Its function is as follows. UDP-glucuronosyltransferases catalyze phase II biotransformation reactions in which lipophilic substrates are conjugated with glucuronic acid to increase water solubility and enhance excretion. They are of major importance in the conjugation and subsequent elimination of potentially toxic xenobiotics and endogenous compounds. The protein is UDP-glucuronosyltransferase 3A1 (Ugt3a1) of Mus musculus (Mouse).